The chain runs to 161 residues: Bacterial E2-like ubiquitin protein BilB (161 aa).

Catalysis depends on Cys-113, which acts as the Glycyl thioester intermediate.

Functionally, component of the Bil (bacterial ISG15-like) antiviral defense system, composed of BilA, BilB, BilC and BilD. The Bil system specifically conjugates a ubiquitin-like moiety (bilA) to the bacteriophage central tail fiber (CTF, or tip attachment protein J) via reactions involving E1 (bilD) and E2 (bilB). Modifies CTF of phage SECphi27 and SECphi4, which probably interferes with assembly of the phage tail. Also modifies T5 baseplate hub protein pb3 (gene D16), but not gp27 of phage T6 (Bil defends against T6). BilB probably accepts ubiquitin from the BilA-BilD (E1) complex and catalyzes its covalent attachment to target protein (CTF). Bil-encoding bacteria produce mostly defective phage SECphi27, many of which have phage assembly defects, including no tails. SECphi27 phage progeny produced in E.coli with the Bil system inject less DNA into naive host cells, maybe because the phage are less able to adsorb and inject their DNA into host cells. Expression of the Bil system in E.coli (strain MG1655) confers about 100-fold resistance to phage SECphi27, SECphi18, SECphi6, SECphi4 and T5, but not to SECphi17. When cells expressing the Bil system are infected by phage SECphi27 at low multiplicity of infection (0.03 MOI) the culture survives, at 3.0 MOI the culture collapses at the same time as cells without the Bil system. This chain is Bacterial E2-like ubiquitin protein BilB, found in Collimonas sp. (strain OK412).